The following is a 79-amino-acid chain: Small ribosomal subunit protein bS18 (79 aa).

The protein belongs to the bacterial ribosomal protein bS18 family. In terms of assembly, part of the 30S ribosomal subunit. Forms a tight heterodimer with protein bS6.

Binds as a heterodimer with protein bS6 to the central domain of the 16S rRNA, where it helps stabilize the platform of the 30S subunit. This is Small ribosomal subunit protein bS18 from Micrococcus luteus (strain ATCC 4698 / DSM 20030 / JCM 1464 / CCM 169 / CCUG 5858 / IAM 1056 / NBRC 3333 / NCIMB 9278 / NCTC 2665 / VKM Ac-2230) (Micrococcus lysodeikticus).